We begin with the raw amino-acid sequence, 299 residues long: uncharacterized protein (299 aa).

Catalysis depends on charge relay system residues T47 and Y109. Y138 functions as the Proton donor in the catalytic mechanism. K168 serves as the catalytic Schiff-base intermediate with substrate.

Belongs to the DapA family. As to quaternary structure, homotetramer.

It localises to the cytoplasm. This is an uncharacterized protein from Chloroflexus aurantiacus (strain ATCC 29366 / DSM 635 / J-10-fl).